Reading from the N-terminus, the 472-residue chain is WAS protein family homolog DDB_G0292878 (472 aa).

The interval 279–472 (LPTYDNSNSG…ESDTDSSEWE (194 aa)) is disordered. Polar residues predominate over residues 282–299 (YDNSNSGSAPVNQSSGGD). Over residues 300 to 314 (NNVNNNNNNNNSNNS) the composition is skewed to low complexity. The span at 320–356 (PPQPTNAPPPPPPPPQSANAPPPPPPPPVSAPPPFNP) shows a compositional bias: pro residues. The segment covering 363-373 (NDDDDDDDDDN) has biased composition (acidic residues). Gly residues predominate over residues 374-383 (GGGGGPGGAI). The 20-residue stretch at 382 to 401 (AIGDLLADIRRGHKNRLKKA) folds into the WH2 domain. Over residues 457-472 (TDDQDGESDTDSSEWE) the composition is skewed to acidic residues.

The protein belongs to the WASH1 family.

Functionally, acts as a nucleation-promoting factor by activating the Arp2/3 complex to induce actin polymerization. This is WAS protein family homolog DDB_G0292878 from Dictyostelium discoideum (Social amoeba).